The chain runs to 224 residues: CMRF35-like molecule 6 (224 aa).

Residues 1–20 (MTARAWASWRSSALLLLLVP) form the signal peptide. The Extracellular portion of the chain corresponds to 21–183 (GYFPLSHPMT…HPGSLFSNVR (163 aa)). The Ig-like V-type domain occupies 22–130 (YFPLSHPMTV…HDPIVEVEVS (109 aa)). Intrachain disulfides connect cysteine 43–cysteine 110 and cysteine 57–cysteine 65. Asparagine 90 and asparagine 99 each carry an N-linked (GlcNAc...) asparagine glycan. Residues 136 to 151 (TTTASSPQSSMGTSGP) show a composition bias toward polar residues. The interval 136 to 174 (TTTASSPQSSMGTSGPPTKLPVHTWPSVTRKDSPEPSPH) is disordered. A helical membrane pass occupies residues 184–204 (FLLLVLLELPLLLSMLGAVLW). The Cytoplasmic segment spans residues 205–224 (VNRPQRSSRSRQNWPKGENQ).

It belongs to the CD300 family. In terms of tissue distribution, present on the surface of monocytes, neutrophils, a proportion of peripheral blood T- and B-lymphocytes and lymphocytic cell lines.

Its subcellular location is the cell membrane. In Homo sapiens (Human), this protein is CMRF35-like molecule 6 (CD300C).